Here is a 558-residue protein sequence, read N- to C-terminus: Dihydroxy-acid dehydratase (558 aa).

D78 provides a ligand contact to Mg(2+). Residue C119 participates in [2Fe-2S] cluster binding. Mg(2+) contacts are provided by D120 and K121. N6-carboxylysine is present on K121. C192 lines the [2Fe-2S] cluster pocket. Residue E446 coordinates Mg(2+). S472 functions as the Proton acceptor in the catalytic mechanism.

This sequence belongs to the IlvD/Edd family. Homodimer. [2Fe-2S] cluster serves as cofactor. Requires Mg(2+) as cofactor.

The enzyme catalyses (2R)-2,3-dihydroxy-3-methylbutanoate = 3-methyl-2-oxobutanoate + H2O. It carries out the reaction (2R,3R)-2,3-dihydroxy-3-methylpentanoate = (S)-3-methyl-2-oxopentanoate + H2O. The protein operates within amino-acid biosynthesis; L-isoleucine biosynthesis; L-isoleucine from 2-oxobutanoate: step 3/4. Its pathway is amino-acid biosynthesis; L-valine biosynthesis; L-valine from pyruvate: step 3/4. Its function is as follows. Functions in the biosynthesis of branched-chain amino acids. Catalyzes the dehydration of (2R,3R)-2,3-dihydroxy-3-methylpentanoate (2,3-dihydroxy-3-methylvalerate) into 2-oxo-3-methylpentanoate (2-oxo-3-methylvalerate) and of (2R)-2,3-dihydroxy-3-methylbutanoate (2,3-dihydroxyisovalerate) into 2-oxo-3-methylbutanoate (2-oxoisovalerate), the penultimate precursor to L-isoleucine and L-valine, respectively. This is Dihydroxy-acid dehydratase from Campylobacter jejuni subsp. jejuni serotype O:2 (strain ATCC 700819 / NCTC 11168).